We begin with the raw amino-acid sequence, 250 residues long: Probable transcriptional regulatory protein Cphamn1_0542 (250 aa).

It belongs to the TACO1 family.

Its subcellular location is the cytoplasm. This Chlorobium phaeobacteroides (strain BS1) protein is Probable transcriptional regulatory protein Cphamn1_0542.